The chain runs to 39 residues: MGDLSEADSMKHQLQRRDCGRCGLGQICDAGACRPSTMM.

A propeptide spanning residues 1-15 (MGDLSEADSMKHQLQ) is cleaved from the precursor.

Post-translationally, contains 2 disulfide bonds. In terms of tissue distribution, expressed by the venom duct.

It is found in the secreted. In Californiconus californicus (California cone), this protein is Conotoxin Cl14.7.